The primary structure comprises 362 residues: dTDP-glucose 4,6-dehydratase (362 aa).

NAD(+) is bound by residues 11 to 12, 32 to 35, 58 to 59, 80 to 84, and Thr-99; these read FI, DKLT, DI, and LAAES. Ser-84 contributes to the substrate binding site. Thr-133 is a binding site for substrate. Asp-134 acts as the Proton donor in catalysis. Catalysis depends on proton acceptor residues Glu-135 and Tyr-167. 167-171 contributes to the NAD(+) binding site; it reads YSASK. Residue Asn-196 coordinates substrate. Asn-197 is an NAD(+) binding site. Substrate contacts are provided by residues 206–207, 222–224, Arg-231, Asn-266, and 300–304; these read KL, PVY, and DRPGH.

This sequence belongs to the NAD(P)-dependent epimerase/dehydratase family. dTDP-glucose dehydratase subfamily. The cofactor is NAD(+).

It carries out the reaction dTDP-alpha-D-glucose = dTDP-4-dehydro-6-deoxy-alpha-D-glucose + H2O. Its pathway is bacterial outer membrane biogenesis; LPS O-antigen biosynthesis. In terms of biological role, catalyzes the dehydration of dTDP-D-glucose to form dTDP-4-dehydro-6-deoxy-D-glucose via a three-step process involving oxidation, dehydration and reduction. This reaction is a step in the biosynthesis of D-fucofuranose, a component of E.coli O52 O antigen. The protein is dTDP-glucose 4,6-dehydratase (rmlB) of Escherichia coli.